The following is a 246-amino-acid chain: Small ribosomal subunit protein uS2 (246 aa).

It belongs to the universal ribosomal protein uS2 family.

This is Small ribosomal subunit protein uS2 from Burkholderia cenocepacia (strain HI2424).